Consider the following 233-residue polypeptide: 2-phytyl-1,4-naphtoquinone methyltransferase (233 aa).

It belongs to the class I-like SAM-binding methyltransferase superfamily. MenG/UbiE family.

It carries out the reaction demethylphylloquinol + S-adenosyl-L-methionine = phylloquinol + S-adenosyl-L-homocysteine + H(+). The protein operates within cofactor biosynthesis; phylloquinone biosynthesis. Functionally, methyltransferase required for the conversion of 2-phytyl-1,4-beta-naphthoquinol to phylloquinol. The protein is 2-phytyl-1,4-naphtoquinone methyltransferase of Synechococcus elongatus (strain ATCC 33912 / PCC 7942 / FACHB-805) (Anacystis nidulans R2).